Reading from the N-terminus, the 189-residue chain is GTPase NRas (189 aa).

GTP contacts are provided by residues 10–18 (GAGGVGKSA) and 29–30 (VD). The Effector region motif lies at 32-40 (YDPTIEDSY). 57 to 61 (DTAGQ) contacts GTP. S89 carries the post-translational modification Phosphoserine. Residue 116–119 (NKCD) participates in GTP binding. Residues 166–185 (YRMKKLNSSEDGTQGCMGLP) form a hypervariable region region. Residue K170 forms a Glycyl lysine isopeptide (Lys-Gly) (interchain with G-Cter in ubiquitin) linkage. The S-palmitoyl cysteine moiety is linked to residue C181. A lipid anchor (S-farnesyl cysteine) is attached at C186. The propeptide at 187 to 189 (VVM) is removed in mature form.

Belongs to the small GTPase superfamily. Ras family. In terms of assembly, interacts (active GTP-bound form preferentially) with RGS14. Interacts (active GTP-bound form) with RASSF7. Interacts (active GTP-bound form) with both SHOC2 and PP1c (all isoforms) to form a tertiary complex; SHOC2 and PP1c preferably bind M-Ras/MRAS, but they also bind K-Ras/KRAS, N-Ras/NRAS and H-Ras/HRAS. In terms of processing, palmitoylated by the ZDHHC9-GOLGA7 complex. Depalmitoylated by ABHD17A, ABHD17B and ABHD17C. A continuous cycle of de- and re-palmitoylation regulates rapid exchange between plasma membrane and Golgi. Post-translationally, acetylation at Lys-104 prevents interaction with guanine nucleotide exchange factors (GEFs). Ubiquitinated by the BCR(LZTR1) E3 ubiquitin ligase complex at Lys-170 in a non-degradative manner, leading to inhibit Ras signaling by decreasing Ras association with membranes. In terms of processing, phosphorylation at Ser-89 enhances NRAS association with its downstream effectors.

Its subcellular location is the cell membrane. It is found in the golgi apparatus membrane. It catalyses the reaction GTP + H2O = GDP + phosphate + H(+). Its activity is regulated as follows. Alternates between an inactive form bound to GDP and an active form bound to GTP. Activated by a guanine nucleotide-exchange factor (GEF) and inactivated by a GTPase-activating protein (GAP). Functionally, ras proteins bind GDP/GTP and possess intrinsic GTPase activity. The protein is GTPase NRas (Nras) of Rattus norvegicus (Rat).